Reading from the N-terminus, the 331-residue chain is Hyaluronidase B (331 aa).

2 cysteine pairs are disulfide-bonded: cysteine 19–cysteine 308 and cysteine 185–cysteine 197. The N-linked (GlcNAc...) asparagine glycan is linked to asparagine 79. Glutamate 109 acts as the Proton donor in catalysis.

This sequence belongs to the glycosyl hydrolase 56 family. In terms of tissue distribution, expressed by the venom gland.

The protein localises to the secreted. The catalysed reaction is Random hydrolysis of (1-&gt;4)-linkages between N-acetyl-beta-D-glucosamine and D-glucuronate residues in hyaluronate.. Its function is as follows. Hydrolyzes high molecular weight hyaluronic acid to produce small oligosaccharides. The sequence is that of Hyaluronidase B from Vespa velutina (Asian yellow-legged hornet).